The sequence spans 449 residues: Chromosomal replication initiator protein DnaA (449 aa).

The interval 1-71 (MPSSLWKHCL…LLSHYSSGRI (71 aa)) is domain I, interacts with DnaA modulators. Residues 71–112 (IEKALLEVGSCSLQPQPHIQAVELTSKSARSSSRVVDRIPES) form a domain II region. The domain III, AAA+ region stretch occupies residues 113–329 (RLNKNYTFDS…GALRRVIAYS (217 aa)). Glycine 157, glycine 159, lysine 160, and threonine 161 together coordinate ATP. The segment at 330–449 (RFTHRPITME…YHNLLKKLST (120 aa)) is domain IV, binds dsDNA.

This sequence belongs to the DnaA family. In terms of assembly, oligomerizes as a right-handed, spiral filament on DNA at oriC.

It is found in the cytoplasm. Functionally, plays an essential role in the initiation and regulation of chromosomal replication. ATP-DnaA binds to the origin of replication (oriC) to initiate formation of the DNA replication initiation complex once per cell cycle. Binds the DnaA box (a 9 base pair repeat at the origin) and separates the double-stranded (ds)DNA. Forms a right-handed helical filament on oriC DNA; dsDNA binds to the exterior of the filament while single-stranded (ss)DNA is stabiized in the filament's interior. The ATP-DnaA-oriC complex binds and stabilizes one strand of the AT-rich DNA unwinding element (DUE), permitting loading of DNA polymerase. After initiation quickly degrades to an ADP-DnaA complex that is not apt for DNA replication. Binds acidic phospholipids. In Nitrosococcus oceani (strain ATCC 19707 / BCRC 17464 / JCM 30415 / NCIMB 11848 / C-107), this protein is Chromosomal replication initiator protein DnaA.